The primary structure comprises 238 residues: Flagellar L-ring protein (238 aa).

Residues 1-16 (MNKAILAVAMVLLLAG) form the signal peptide. Cys17 is lipidated: N-palmitoyl cysteine. The S-diacylglycerol cysteine moiety is linked to residue Cys17.

Belongs to the FlgH family. In terms of assembly, the basal body constitutes a major portion of the flagellar organelle and consists of four rings (L,P,S, and M) mounted on a central rod.

It localises to the cell outer membrane. The protein resides in the bacterial flagellum basal body. Functionally, assembles around the rod to form the L-ring and probably protects the motor/basal body from shearing forces during rotation. The sequence is that of Flagellar L-ring protein from Brucella melitensis biotype 2 (strain ATCC 23457).